The following is a 283-amino-acid chain: ATP synthase gamma chain (283 aa).

Belongs to the ATPase gamma chain family. As to quaternary structure, F-type ATPases have 2 components, CF(1) - the catalytic core - and CF(0) - the membrane proton channel. CF(1) has five subunits: alpha(3), beta(3), gamma(1), delta(1), epsilon(1). CF(0) has three main subunits: a, b and c.

The protein resides in the cell inner membrane. Its function is as follows. Produces ATP from ADP in the presence of a proton gradient across the membrane. The gamma chain is believed to be important in regulating ATPase activity and the flow of protons through the CF(0) complex. This chain is ATP synthase gamma chain, found in Ehrlichia ruminantium (strain Welgevonden).